Reading from the N-terminus, the 341-residue chain is MKKENKSVIIWLLSGCVLLFLMVVVGGITRLTNSGLSMTDWHLVTDTFPPLTDAKWQAAFDEYKKFPEYQKINIHNDFQLSDYKFIYFWEWFHRFIGRIIGLVFFVPFVYFLAKKKLDTSTIKKCIVLLAMGAFQGFLGWFMVRSGLIDNPDVSHFRLSLHLTFAFITFAYTLWVALDLIYPERNINKILPLRNIARYALAALLIQIIYGGFVAGLNAGLIHNHWPLMSDGEFIHESVFIEQSSLIKNLIEGKSGVQFVHRTFAYAVVAVILFLFFKSKKYTLTRTQSNGINTLVVFVFIQFLLGVFTLLYSVPLALGLIHQIMAFFLLSAMTYTLHRLSK.

A run of 8 helical transmembrane segments spans residues 8 to 28 (VIIWLLSGCVLLFLMVVVGGI), 92 to 112 (FHRFIGRIIGLVFFVPFVYFL), 126 to 146 (IVLLAMGAFQGFLGWFMVRSG), 160 to 180 (LHLTFAFITFAYTLWVALDLI), 201 to 221 (AALLIQIIYGGFVAGLNAGLI), 256 to 276 (VQFVHRTFAYAVVAVILFLFF), 294 to 314 (LVVFVFIQFLLGVFTLLYSVP), and 315 to 335 (LALGLIHQIMAFFLLSAMTYT). Residue histidine 260 coordinates heme. A heme-binding site is contributed by histidine 321.

This sequence belongs to the COX15/CtaA family. Type 2 subfamily. Interacts with CtaB. Heme b is required as a cofactor.

The protein resides in the cell membrane. The catalysed reaction is Fe(II)-heme o + 2 A + H2O = Fe(II)-heme a + 2 AH2. It participates in porphyrin-containing compound metabolism; heme A biosynthesis; heme A from heme O: step 1/1. Its function is as follows. Catalyzes the conversion of heme O to heme A by two successive hydroxylations of the methyl group at C8. The first hydroxylation forms heme I, the second hydroxylation results in an unstable dihydroxymethyl group, which spontaneously dehydrates, resulting in the formyl group of heme A. This is Heme A synthase from Flavobacterium johnsoniae (strain ATCC 17061 / DSM 2064 / JCM 8514 / BCRC 14874 / CCUG 350202 / NBRC 14942 / NCIMB 11054 / UW101) (Cytophaga johnsonae).